Here is a 1248-residue protein sequence, read N- to C-terminus: Apoptotic protease-activating factor 1 (1248 aa).

One can recognise a CARD domain in the interval 1–90 (MDAKARNCLL…KDLAALLHDG (90 aa)). Residues 104–415 (SGITSYVRTV…METEEVEDIL (312 aa)) enclose the NB-ARC domain. ATP is bound by residues 154-161 (GMAGCGKS) and Arg265. Residues 613–652 (PHTDAVYHACFSEDGQRIASCGADKTLQVFKAETGEKLLE) form a WD 1-1 repeat. Residues 655-694 (AHEDEVLCCAFSTDDRFIATCSVDKKVKIWNSMTGELVHT) form a WD 1-2 repeat. Residues 697 to 738 (EHSEQVNCCHFTNSSHHLLLATGSSDCFLKLWDLNQKECRNT) form a WD 1-3 repeat. One copy of the WD 1-4 repeat lies at 741–780 (GHTNSVNHCRFSPDDKLLASCSADGTLKLWDATSANERKS). The WD 1-5 repeat unit spans residues 796-836 (DMEVIVKCCSWSADGARIMVAAKNKIFLFDIHTSGLLGEIH). The WD 1-6 repeat unit spans residues 838–877 (GHHSTIQYCDFSPQNHLAVVALSQYCVELWNTDSRSKVAD). The stretch at 880–910 (GHLSWVHGVMFSPDGSSFLTSSDDQTIRLWE) is one WD 1-7 repeat. Residues 910–921 (ETKKVCKNSAVM) form an interpropeller linker region. The stretch at 922–958 (LKQEVDVVFQENEVMVLAVDHIRRLQLINGRTGQIDY) is one WD 2-1 repeat. The stretch at 959 to 998 (LTEAQVSCCCLSPHLQYIAFGDENGAIEILELVNNRIFQS) is one WD 2-2 repeat. The WD 2-3 repeat unit spans residues 1001 to 1040 (QHKKTVWHIQFTADEKTLISSSDDAEIQVWNWQLDKCIFL). The WD 2-4 repeat unit spans residues 1042-1080 (GHQETVKDFRLLKNSRLLSWSFDGTVKVWNIITGNKEKD). The stretch at 1083-1122 (CHQGTVLSCDISHDATKFSSTSADKTAKIWSFDLLLPLHE) is one WD 2-5 repeat. Residues 1125–1164 (GHNGCVRCSAFSVDSTLLATGDDNGEIRIWNVSNGELLHL) form a WD 2-6 repeat. A WD 2-7 repeat occupies 1175 to 1212 (THGGWVTDLCFSPDGKMLISAGGYIKWWNVVTGESSQT). The WD 2-8 repeat unit spans residues 1213-1248 (FYTNGTNLKKIHVSPDFKTYVTVDNLGILYILQTLE).

In terms of assembly, monomer. Oligomerizes to a heptameric ring, known as the apoptosome, upon binding of cytochrome c and dATP. Oligomeric Apaf-1 and pro-caspase-9 bind to each other via their respective NH2-terminal CARD domains and consecutively mature caspase-9 is released from the complex. Pro-caspase-3 is recruited into the Apaf-1-pro-caspase-9 complex via interaction with pro-caspase-9. Interacts with APIP. Interacts (via CARD and NACHT domains) with NAIP/BIRC1 (via NACHT domain). Interacts with CIAO2A. In terms of tissue distribution, ubiquitous. Highest levels of expression in adult spleen and peripheral blood leukocytes, and in fetal brain, kidney and lung. Isoform 1 is expressed in heart, kidney and liver.

It is found in the cytoplasm. Its function is as follows. Oligomeric Apaf-1 mediates the cytochrome c-dependent autocatalytic activation of pro-caspase-9 (Apaf-3), leading to the activation of caspase-3 and apoptosis. This activation requires ATP. Isoform 6 is less effective in inducing apoptosis. The polypeptide is Apoptotic protease-activating factor 1 (Homo sapiens (Human)).